We begin with the raw amino-acid sequence, 230 residues long: Prolactin-3D1 (230 aa).

Positions 1–29 (MQLTLTLSRASGMQLFLLVSSLLLWEKVA) are cleaved as a signal peptide. 2 cysteine pairs are disulfide-bonded: Cys-81/Cys-200 and Cys-217/Cys-225. N-linked (GlcNAc...) asparagine glycans are attached at residues Asn-109 and Asn-158.

The protein belongs to the somatotropin/prolactin family.

The protein resides in the secreted. The protein is Prolactin-3D1 (Prl3d1) of Rattus norvegicus (Rat).